Here is a 447-residue protein sequence, read N- to C-terminus: MNAWEVNFDGLVGLTHHYAGLSFGNEASTRHRFQSSNPRLAAKQGLLKMKNLADAGFPQAVIPPHERPFIPVLRQLGFSGSDEHVLEKVARQAPHWLSSVSSASPMWVANAATIAPSADTLDGKVHLTVANLNNKFHRSLEAPVTESLLKAIFDDEEKFSVHSALPQVALLGDEGAANHNRLGGHYGEPGMQLFVYGREEGNDTRPSRYPARQTREASEAVARLNQVNPQQVIFAQQNPDVIDQGVFHNDVIAVSNRQVLFCHQQAFARQSQLLASLRARVNGFMAIEVPATHVSVSDAVSTYLFNSQLLSRDDGSMMLVLPQECREHAGVWGYLNELLAADNPISELKVFDLRESMANGGGPACLRLRVVLTEEERRAVNPAVMMNDTLFNALNDWVDRYYRDRLTAADLADPQLLREGREALDVLSQLLNLGSVYPFQREGGGNG.

Substrate-binding positions include 19 to 28 (AGLSFGNEAS), Asn-110, and 137 to 138 (HR). Glu-174 is an active-site residue. Arg-212 contacts substrate. The active site involves His-248. The substrate site is built by Asp-250 and Asn-359. The active-site Nucleophile is Cys-365.

This sequence belongs to the succinylarginine dihydrolase family. Homodimer.

The catalysed reaction is N(2)-succinyl-L-arginine + 2 H2O + 2 H(+) = N(2)-succinyl-L-ornithine + 2 NH4(+) + CO2. The protein operates within amino-acid degradation; L-arginine degradation via AST pathway; L-glutamate and succinate from L-arginine: step 2/5. Its function is as follows. Catalyzes the hydrolysis of N(2)-succinylarginine into N(2)-succinylornithine, ammonia and CO(2). This chain is N-succinylarginine dihydrolase, found in Escherichia coli O7:K1 (strain IAI39 / ExPEC).